The following is an 857-amino-acid chain: Autoinducer 2 sensor kinase/phosphatase LuxQ (857 aa).

The next 2 membrane-spanning stretches (helical) occupy residues Ile-20 to Ser-40 and Leu-283 to Ile-303. A Histidine kinase domain is found at Lys-490–Lys-712. The residue at position 493 (His-493) is a Phosphohistidine; by autocatalysis. Positions Lys-735–Lys-850 constitute a Response regulatory domain. 4-aspartylphosphate is present on Asp-784.

As to quaternary structure, binds the complex formed by the autoinducer and LuxP.

The protein localises to the cell inner membrane. The catalysed reaction is ATP + protein L-histidine = ADP + protein N-phospho-L-histidine.. Functionally, at low cell density, in absence of autoinducer has a kinase activity, and autophosphorylates on a histidine residue. The phosphoryl group is then transferred to an aspartate residue in the response regulator domain. The phosphoryl group is transferred to LuxU, and ultimately to LuxO. At high cell density, in the presence of autoinducer, the kinase activity is inactivated, and the response regulator domain has a phosphatase activity. This is Autoinducer 2 sensor kinase/phosphatase LuxQ (luxQ) from Vibrio vulnificus (strain CMCP6).